A 272-amino-acid polypeptide reads, in one-letter code: Phosphoribosylformylglycinamidine synthase subunit PurQ (272 aa).

Positions 8 to 243 (VLVMSGYGIN…SEPEYQLKKE (236 aa)) constitute a Glutamine amidotransferase type-1 domain. Residue Cys-98 is the Nucleophile of the active site. Catalysis depends on residues His-225, Glu-227, and Glu-235.

Part of the FGAM synthase complex composed of 1 PurL, 1 PurQ and 2 PurS subunits.

It is found in the cytoplasm. The enzyme catalyses N(2)-formyl-N(1)-(5-phospho-beta-D-ribosyl)glycinamide + L-glutamine + ATP + H2O = 2-formamido-N(1)-(5-O-phospho-beta-D-ribosyl)acetamidine + L-glutamate + ADP + phosphate + H(+). The catalysed reaction is L-glutamine + H2O = L-glutamate + NH4(+). Its pathway is purine metabolism; IMP biosynthesis via de novo pathway; 5-amino-1-(5-phospho-D-ribosyl)imidazole from N(2)-formyl-N(1)-(5-phospho-D-ribosyl)glycinamide: step 1/2. Functionally, part of the phosphoribosylformylglycinamidine synthase complex involved in the purines biosynthetic pathway. Catalyzes the ATP-dependent conversion of formylglycinamide ribonucleotide (FGAR) and glutamine to yield formylglycinamidine ribonucleotide (FGAM) and glutamate. The FGAM synthase complex is composed of three subunits. PurQ produces an ammonia molecule by converting glutamine to glutamate. PurL transfers the ammonia molecule to FGAR to form FGAM in an ATP-dependent manner. PurS interacts with PurQ and PurL and is thought to assist in the transfer of the ammonia molecule from PurQ to PurL. The protein is Phosphoribosylformylglycinamidine synthase subunit PurQ of Methanococcus maripaludis (strain C7 / ATCC BAA-1331).